Here is an 83-residue protein sequence, read N- to C-terminus: Small ribosomal subunit protein bS20 (83 aa).

The protein belongs to the bacterial ribosomal protein bS20 family.

Functionally, binds directly to 16S ribosomal RNA. The sequence is that of Small ribosomal subunit protein bS20 from Flavobacterium psychrophilum (strain ATCC 49511 / DSM 21280 / CIP 103535 / JIP02/86).